We begin with the raw amino-acid sequence, 289 residues long: MPIAKPINQNTTVPYPPQHYSKPPLVIILTVILLVVFFIGFFAIYFCKCFYHTLTEAWNHHYHNGLPENQIQAQQEPVQPPVNPGLEPHIIQSYPLFPFSSVKDLREDKYGLECAICLLEFEEEHILLRLLTTCYHVFHQECIDQWLESNKTCPVCRRNLDPNAPENIKELIIEVIQENAHENRDQEQTSTSNEVMLSRQSSGNNERKIETLPDKFSRSKTTGHSIVRNKPEEEDRYTLRLPDHVKIKVTRRHNNNQTESCISFGELVRNREGRFGEVSGQSLVPESGS.

A helical transmembrane segment spans residues Val-26–Phe-46. The RING-type; atypical zinc finger occupies Cys-114–Arg-157. Residues His-181–Glu-206 are disordered. Over residues Gln-188–Asn-204 the composition is skewed to polar residues.

Belongs to the RING-type zinc finger family. ATL subfamily.

The protein localises to the membrane. It catalyses the reaction S-ubiquitinyl-[E2 ubiquitin-conjugating enzyme]-L-cysteine + [acceptor protein]-L-lysine = [E2 ubiquitin-conjugating enzyme]-L-cysteine + N(6)-ubiquitinyl-[acceptor protein]-L-lysine.. It functions in the pathway protein modification; protein ubiquitination. This chain is RING-H2 finger protein ATL30 (ATL30), found in Arabidopsis thaliana (Mouse-ear cress).